Consider the following 347-residue polypeptide: N-acetyl-gamma-glutamyl-phosphate reductase (347 aa).

Cys-152 is a catalytic residue.

This sequence belongs to the NAGSA dehydrogenase family. Type 1 subfamily.

It localises to the cytoplasm. It carries out the reaction N-acetyl-L-glutamate 5-semialdehyde + phosphate + NADP(+) = N-acetyl-L-glutamyl 5-phosphate + NADPH + H(+). Its pathway is amino-acid biosynthesis; L-arginine biosynthesis; N(2)-acetyl-L-ornithine from L-glutamate: step 3/4. Its function is as follows. Catalyzes the NADPH-dependent reduction of N-acetyl-5-glutamyl phosphate to yield N-acetyl-L-glutamate 5-semialdehyde. The sequence is that of N-acetyl-gamma-glutamyl-phosphate reductase from Neisseria meningitidis serogroup A / serotype 4A (strain DSM 15465 / Z2491).